A 183-amino-acid chain; its full sequence is uncharacterized protein (183 aa).

Positions 1 to 182 (MIKVVKGDIT…KALKIVGQGG (182 aa)) constitute a Macro domain.

This is an uncharacterized protein from Pyrococcus furiosus (strain ATCC 43587 / DSM 3638 / JCM 8422 / Vc1).